The chain runs to 278 residues: Release factor glutamine methyltransferase (278 aa).

S-adenosyl-L-methionine contacts are provided by residues 116 to 120 (GTGTG), Asp139, Trp168, and Asn182. Residue 182–185 (NPPY) participates in substrate binding.

It belongs to the protein N5-glutamine methyltransferase family. PrmC subfamily.

The catalysed reaction is L-glutaminyl-[peptide chain release factor] + S-adenosyl-L-methionine = N(5)-methyl-L-glutaminyl-[peptide chain release factor] + S-adenosyl-L-homocysteine + H(+). In terms of biological role, methylates the class 1 translation termination release factors RF1/PrfA and RF2/PrfB on the glutamine residue of the universally conserved GGQ motif. The polypeptide is Release factor glutamine methyltransferase (Cereibacter sphaeroides (strain ATCC 17023 / DSM 158 / JCM 6121 / CCUG 31486 / LMG 2827 / NBRC 12203 / NCIMB 8253 / ATH 2.4.1.) (Rhodobacter sphaeroides)).